The chain runs to 356 residues: Nitrilase, arylacetone-specific (356 aa).

Positions 7 to 280 (VRAAAVQAAS…EGLIIADLNM (274 aa)) constitute a CN hydrolase domain. E47 (proton acceptor) is an active-site residue. The active-site Proton donor is the K129. The active-site Nucleophile is C163. The interval 324–356 (QEEAPEPHVQSTAAPVAVSQTQDSDTLLVQEPS) is disordered. A compositionally biased stretch (polar residues) spans 332 to 356 (VQSTAAPVAVSQTQDSDTLLVQEPS).

This sequence belongs to the carbon-nitrogen hydrolase superfamily. Nitrilase family. In terms of assembly, homohexamer.

The enzyme catalyses a nitrile + 2 H2O = a carboxylate + NH4(+). Functionally, nitrilase that acts mostly on arylacetonitriles. The chain is Nitrilase, arylacetone-specific from Alcaligenes faecalis.